The sequence spans 635 residues: BTB/POZ domain-containing protein SETH6 (635 aa).

A BTB domain is found at S39 to S104. The 289-residue stretch at D206–R494 folds into the NPH3 domain. Y435 bears the Phosphotyrosine mark. The disordered stretch occupies residues Q604–S635. Over residues K612 to F624 the composition is skewed to basic and acidic residues. The span at M625–S635 shows a compositional bias: basic residues.

This sequence belongs to the NPH3 family.

It functions in the pathway protein modification; protein ubiquitination. Its function is as follows. May act as a substrate-specific adapter of an E3 ubiquitin-protein ligase complex (CUL3-RBX1-BTB) which mediates the ubiquitination and subsequent proteasomal degradation of target proteins. The protein is BTB/POZ domain-containing protein SETH6 (SETH6) of Arabidopsis thaliana (Mouse-ear cress).